The primary structure comprises 393 residues: Arginine biosynthesis bifunctional protein ArgJ (393 aa).

Residues threonine 145, lysine 171, threonine 182, glutamate 265, asparagine 388, and serine 393 each contribute to the substrate site. The active-site Nucleophile is threonine 182.

It belongs to the ArgJ family. As to quaternary structure, heterotetramer of two alpha and two beta chains.

Its subcellular location is the cytoplasm. It catalyses the reaction N(2)-acetyl-L-ornithine + L-glutamate = N-acetyl-L-glutamate + L-ornithine. It carries out the reaction L-glutamate + acetyl-CoA = N-acetyl-L-glutamate + CoA + H(+). The protein operates within amino-acid biosynthesis; L-arginine biosynthesis; L-ornithine and N-acetyl-L-glutamate from L-glutamate and N(2)-acetyl-L-ornithine (cyclic): step 1/1. It functions in the pathway amino-acid biosynthesis; L-arginine biosynthesis; N(2)-acetyl-L-ornithine from L-glutamate: step 1/4. In terms of biological role, catalyzes two activities which are involved in the cyclic version of arginine biosynthesis: the synthesis of N-acetylglutamate from glutamate and acetyl-CoA as the acetyl donor, and of ornithine by transacetylation between N(2)-acetylornithine and glutamate. In Nitratidesulfovibrio vulgaris (strain ATCC 29579 / DSM 644 / CCUG 34227 / NCIMB 8303 / VKM B-1760 / Hildenborough) (Desulfovibrio vulgaris), this protein is Arginine biosynthesis bifunctional protein ArgJ.